Consider the following 157-residue polypeptide: Ribosomal RNA large subunit methyltransferase H (157 aa).

Residues Leu-74, Gly-106, and 125-130 each bind S-adenosyl-L-methionine; that span reads LSDMTL.

It belongs to the RNA methyltransferase RlmH family. In terms of assembly, homodimer.

The protein resides in the cytoplasm. It catalyses the reaction pseudouridine(1915) in 23S rRNA + S-adenosyl-L-methionine = N(3)-methylpseudouridine(1915) in 23S rRNA + S-adenosyl-L-homocysteine + H(+). Functionally, specifically methylates the pseudouridine at position 1915 (m3Psi1915) in 23S rRNA. The polypeptide is Ribosomal RNA large subunit methyltransferase H (Desulfovibrio desulfuricans (strain ATCC 27774 / DSM 6949 / MB)).